Here is a 132-residue protein sequence, read N- to C-terminus: MVMTDPIADMLTRIRNANMVRHEKLEIPASKLKREIADILKREGFIRDVEFVEDSKQGIIRVFLKYGQNNERVITGLKRISKPGLRVYAKSNEVPRVLNGLGIAIISTSQGVLTDKEARAKQAGGEVLAYVW.

The protein belongs to the universal ribosomal protein uS8 family. In terms of assembly, part of the 30S ribosomal subunit. Contacts proteins S5 and S12.

One of the primary rRNA binding proteins, it binds directly to 16S rRNA central domain where it helps coordinate assembly of the platform of the 30S subunit. In Bacillus velezensis (strain DSM 23117 / BGSC 10A6 / LMG 26770 / FZB42) (Bacillus amyloliquefaciens subsp. plantarum), this protein is Small ribosomal subunit protein uS8.